A 647-amino-acid polypeptide reads, in one-letter code: Threonine--tRNA ligase (647 aa).

Positions 1-61 constitute a TGS domain; the sequence is MIKITFPDGA…EEDGSIEIVT (61 aa). Positions 240 to 538 are catalytic; that stretch reads DHRKLGKELD…LIETYKGAFP (299 aa). 3 residues coordinate Zn(2+): Cys-334, His-385, and His-515.

The protein belongs to the class-II aminoacyl-tRNA synthetase family. Homodimer. The cofactor is Zn(2+).

The protein resides in the cytoplasm. It catalyses the reaction tRNA(Thr) + L-threonine + ATP = L-threonyl-tRNA(Thr) + AMP + diphosphate + H(+). In terms of biological role, catalyzes the attachment of threonine to tRNA(Thr) in a two-step reaction: L-threonine is first activated by ATP to form Thr-AMP and then transferred to the acceptor end of tRNA(Thr). Also edits incorrectly charged L-seryl-tRNA(Thr). The protein is Threonine--tRNA ligase of Streptococcus pyogenes serotype M6 (strain ATCC BAA-946 / MGAS10394).